A 96-amino-acid polypeptide reads, in one-letter code: Cobalt transport protein CbiN (96 aa).

Helical transmembrane passes span 4–24 (WLAAGGILLGALVVFSFVSAG) and 59–79 (IESLLFSIQAAVGGIIIGYYL).

This sequence belongs to the CbiN family. In terms of assembly, forms an energy-coupling factor (ECF) transporter complex composed of an ATP-binding protein (A component, CbiO), a transmembrane protein (T component, CbiQ) and 2 possible substrate-capture proteins (S components, CbiM and CbiN) of unknown stoichimetry.

Its subcellular location is the cell membrane. The protein operates within cofactor biosynthesis; adenosylcobalamin biosynthesis. Functionally, part of the energy-coupling factor (ECF) transporter complex CbiMNOQ involved in cobalt import. This Halobacterium salinarum (strain ATCC 29341 / DSM 671 / R1) protein is Cobalt transport protein CbiN.